The sequence spans 727 residues: Polyribonucleotide nucleotidyltransferase (727 aa).

The Mg(2+) site is built by D491 and D497. Positions P558 to I617 constitute a KH domain. The S1 motif domain occupies G627–K701. Residues L698–S727 are disordered. A compositionally biased stretch (polar residues) spans G717–S727.

Belongs to the polyribonucleotide nucleotidyltransferase family. Mg(2+) serves as cofactor.

It is found in the cytoplasm. The catalysed reaction is RNA(n+1) + phosphate = RNA(n) + a ribonucleoside 5'-diphosphate. In terms of biological role, involved in mRNA degradation. Catalyzes the phosphorolysis of single-stranded polyribonucleotides processively in the 3'- to 5'-direction. This is Polyribonucleotide nucleotidyltransferase from Desulfitobacterium hafniense (strain Y51).